A 476-amino-acid chain; its full sequence is Glutamate--tRNA ligase (476 aa).

The 'HIGH' region signature appears at 9–19 (PSPTGLFHIGT). The 'KMSKS' region signature appears at 248-252 (KLSKR). K251 lines the ATP pocket.

It belongs to the class-I aminoacyl-tRNA synthetase family. Glutamate--tRNA ligase type 1 subfamily. In terms of assembly, monomer.

The protein resides in the cytoplasm. It carries out the reaction tRNA(Glu) + L-glutamate + ATP = L-glutamyl-tRNA(Glu) + AMP + diphosphate. Functionally, catalyzes the attachment of glutamate to tRNA(Glu) in a two-step reaction: glutamate is first activated by ATP to form Glu-AMP and then transferred to the acceptor end of tRNA(Glu). This is Glutamate--tRNA ligase from Prochlorococcus marinus (strain MIT 9301).